We begin with the raw amino-acid sequence, 227 residues long: Neuromodulin (227 aa).

Positions 1 to 227 (MLCCMRRTKQ…EDPEADQEHA (227 aa)) are disordered. 2 S-palmitoyl cysteine lipidation sites follow: cysteine 3 and cysteine 4. Positions 9 to 32 (KQVEKNDEDQKIEQDGVKPEDKAH) are enriched in basic and acidic residues. Residues 31 to 60 (AHKAATKIQASFRGHITRKKLKGEKKGDAP) form the IQ domain. Serine 41 bears the Phosphoserine; by PHK mark. Residues 54 to 84 (EKKGDAPAAEAEAKEKDDAPVADGVEKKEGD) show a composition bias toward basic and acidic residues. The span at 85–97 (GSATTDAAPATSP) shows a compositional bias: low complexity. 2 positions are modified to phosphoserine: serine 86 and serine 96. A compositionally biased stretch (basic and acidic residues) spans 98 to 127 (KAEEPSKAGDAPSEEKKGEGDAAPSEEKAG). The segment covering 128–139 (SAETESAAKATT) has biased composition (low complexity). Threonine 138 carries the phosphothreonine modification. Residues serine 142, serine 144, and serine 145 each carry the phosphoserine modification. Basic and acidic residues predominate over residues 146 to 158 (KAEDGPAKEEPKQ). Over residues 159–193 (ADVPAAVTDAAATTPAAEDAATKAAQPPTETAESS) the composition is skewed to low complexity. Position 172 is a phosphothreonine (threonine 172). Residues serine 192 and serine 193 each carry the phosphoserine; by CK2 modification. Positions 202 to 215 (VDEAKPKESARQDE) are enriched in basic and acidic residues. Residues 216 to 227 (GKEDPEADQEHA) show a composition bias toward acidic residues.

The protein belongs to the neuromodulin family. As to quaternary structure, identified in a complex containing FGFR4, NCAM1, CDH2, PLCG1, FRS2, SRC, SHC1, GAP43 and CTTN. Interacts (via IQ domain) with calmodulin. Binds calmodulin with a greater affinity in the absence of Ca(2+) than in its presence. In terms of processing, phosphorylated. Phosphorylation of this protein by a protein kinase C is specifically correlated with certain forms of synaptic plasticity. Palmitoylated by ZDHHC3. Palmitoylation is regulated by ARF6 and is essential for plasma membrane association and axonal and dendritic filopodia induction. Deacylated by LYPLA2. As to expression, expressed in the hippocampus (at protein level). Expressed in the dorsal root ganglion and the spinal cord (at protein level).

The protein localises to the cell membrane. It is found in the cell projection. It localises to the growth cone membrane. Its subcellular location is the synapse. The protein resides in the filopodium membrane. The protein localises to the perikaryon. It is found in the dendrite. It localises to the axon. Its subcellular location is the cytoplasm. Functionally, this protein is associated with nerve growth. It is a major component of the motile 'growth cones' that form the tips of elongating axons. Plays a role in axonal and dendritic filopodia induction. This is Neuromodulin (Gap43) from Mus musculus (Mouse).